A 210-amino-acid chain; its full sequence is Thymidylate kinase (210 aa).

Position 10-17 (10-17) interacts with ATP; that stretch reads GIDGCGKT.

This sequence belongs to the thymidylate kinase family.

The enzyme catalyses dTMP + ATP = dTDP + ADP. In terms of biological role, phosphorylation of dTMP to form dTDP in both de novo and salvage pathways of dTTP synthesis. This Prochlorococcus marinus (strain MIT 9515) protein is Thymidylate kinase.